Reading from the N-terminus, the 359-residue chain is MANLPIEKMRELERRFGEIEARMSAGPAADVYVKLASEYSELQPVVAKIRDYEKAIAEASDLEAMLADKSVDREMRDLADMELPEVKERIEVLEQDIQILLLPKDAADEKSAILEIRAGTGGSEAALFGGDLFRMYERFAANNGWKVEILSASDGEAGGYKEVIATITGKGVFSRLKFESGVHRVQRVPETEAGGRIHTSAATVAVLPEAEEIDIEIRAEDIRIDTMRSSGAGGQHVNTTDSAVRITHLPSGIVVTSSEKSQHQNRAKAMQVLRSRLFDMERQRADSERSADRKSQVGSGDRSERIRTYNFPQGRVTDHRINLTLYKLDRMMEGEIDEVVDALRADYQASQLAQLGEQA.

Glutamine 235 is modified (N5-methylglutamine). The disordered stretch occupies residues 282-306 (RQRADSERSADRKSQVGSGDRSERI).

Belongs to the prokaryotic/mitochondrial release factor family. Post-translationally, methylated by PrmC. Methylation increases the termination efficiency of RF1.

It is found in the cytoplasm. Its function is as follows. Peptide chain release factor 1 directs the termination of translation in response to the peptide chain termination codons UAG and UAA. The protein is Peptide chain release factor 1 of Rhizobium rhizogenes (strain K84 / ATCC BAA-868) (Agrobacterium radiobacter).